We begin with the raw amino-acid sequence, 558 residues long: Vacuolar protein sorting-associated protein 45 (558 aa).

It belongs to the STXBP/unc-18/SEC1 family.

The protein localises to the cytoplasm. It localises to the nucleus. The protein resides in the vacuole membrane. Vacuolar protein sorting-associated protein involved in Golgi-to-vacuole protein transport. The sequence is that of Vacuolar protein sorting-associated protein 45 (vps45) from Schizosaccharomyces pombe (strain 972 / ATCC 24843) (Fission yeast).